Reading from the N-terminus, the 197-residue chain is Phosphoheptose isomerase (197 aa).

The SIS domain maps to M34 to Q196. N49–G51 contacts substrate. Zn(2+)-binding residues include H58 and E62. Substrate contacts are provided by residues E62, N91–D92, S117–S119, S122, and Q172. Residues Q172 and H180 each coordinate Zn(2+).

The protein belongs to the SIS family. GmhA subfamily. Homotetramer. It depends on Zn(2+) as a cofactor.

The protein localises to the cytoplasm. The enzyme catalyses 2 D-sedoheptulose 7-phosphate = D-glycero-alpha-D-manno-heptose 7-phosphate + D-glycero-beta-D-manno-heptose 7-phosphate. It participates in carbohydrate biosynthesis; D-glycero-D-manno-heptose 7-phosphate biosynthesis; D-glycero-alpha-D-manno-heptose 7-phosphate and D-glycero-beta-D-manno-heptose 7-phosphate from sedoheptulose 7-phosphate: step 1/1. Catalyzes the isomerization of sedoheptulose 7-phosphate in D-glycero-D-manno-heptose 7-phosphate. This Shewanella sediminis (strain HAW-EB3) protein is Phosphoheptose isomerase.